The sequence spans 180 residues: Ribosome-recycling factor (180 aa).

Belongs to the RRF family.

Its subcellular location is the cytoplasm. Functionally, responsible for the release of ribosomes from messenger RNA at the termination of protein biosynthesis. May increase the efficiency of translation by recycling ribosomes from one round of translation to another. This chain is Ribosome-recycling factor, found in Chlamydia felis (strain Fe/C-56) (Chlamydophila felis).